The primary structure comprises 296 residues: 2-dehydropantoate 2-reductase (296 aa).

Residues 7-12, Asn-94, and Ala-120 contribute to the NADP(+) site; that span reads GPGAVG. Asn-94 is a substrate binding site. The active-site Proton donor is the Lys-175. 4 residues coordinate substrate: Asn-179, Asn-183, Asn-193, and Ser-245. Residue Glu-257 coordinates NADP(+).

This sequence belongs to the ketopantoate reductase family.

It is found in the cytoplasm. The catalysed reaction is (R)-pantoate + NADP(+) = 2-dehydropantoate + NADPH + H(+). Its pathway is cofactor biosynthesis; (R)-pantothenate biosynthesis; (R)-pantoate from 3-methyl-2-oxobutanoate: step 2/2. In terms of biological role, catalyzes the NADPH-dependent reduction of ketopantoate into pantoic acid. This Vibrio cholerae serotype O1 (strain ATCC 39315 / El Tor Inaba N16961) protein is 2-dehydropantoate 2-reductase (panE).